The chain runs to 210 residues: Ras-related protein Rab-43 (210 aa).

GTP is bound at residue 23–30; it reads GDASVGKT. The Effector region signature appears at 45–53; that stretch reads QGSTIGVDF. A Phosphoserine modification is found at S47. 71–75 contacts GTP; sequence DTAGQ. Residue T80 is modified to Phosphothreonine. GTP-binding positions include 129-132 and 161-162; these read NKSD and AK. 2 S-geranylgeranyl cysteine lipidation sites follow: C208 and C210. At C210 the chain carries Cysteine methyl ester.

It belongs to the small GTPase superfamily. Rab family. Interacts with GDI1, GDI2 and CHM; phosphorylation at Thr-80 disrupts these interactions.

The protein resides in the cytoplasmic vesicle. The protein localises to the phagosome. It is found in the phagosome membrane. It localises to the golgi apparatus. Its subcellular location is the trans-Golgi network membrane. The protein resides in the trans-Golgi network. The small GTPases Rab are key regulators of intracellular membrane trafficking, from the formation of transport vesicles to their fusion with membranes. Rabs cycle between an inactive GDP-bound form and an active GTP-bound form that is able to recruit to membranes different set of downstream effectors directly responsible for vesicle formation, movement, tethering and fusion. The low intrinsic GTPase activity of RAB43 is activated by USP6NL. Involved in retrograde transport from the endocytic pathway to the Golgi apparatus. Involved in the transport of Shiga toxin from early and recycling endosomes to the trans-Golgi network. Required for the structural integrity of the Golgi complex. Plays a role in the maturation of phagosomes that engulf pathogens, such as S.aureus and Mycobacterium. The sequence is that of Ras-related protein Rab-43 (Rab43) from Rattus norvegicus (Rat).